Here is a 635-residue protein sequence, read N- to C-terminus: Sulfite reductase [ferredoxin], chloroplastic (635 aa).

A chloroplast-targeting transit peptide spans 1–50 (MSGAIGGAEVHGFRGAAAQLPRSRVLGRPIRVAPPAAARPGGASAGSIRA). 2 disordered regions span residues 31–50 (RVAPPAAARPGGASAGSIRA) and 245–267 (PEVTKARNDNSHGTNFPDSPEPI). Basic and acidic residues predominate over residues 245–254 (PEVTKARNDN). Residues C494, C500, C540, and C544 each coordinate [4Fe-4S] cluster. C544 contributes to the siroheme binding site.

Belongs to the nitrite and sulfite reductase 4Fe-4S domain family. As to quaternary structure, monomer. Interacts with ferredoxin. Requires siroheme as cofactor. [4Fe-4S] cluster serves as cofactor. Post-translationally, phosphorylated; this phosphorylation reduces DNA-binding. Present in roots and leaves (at protein level). In leaves, sulfite reductase activity is detected in both bundle sheath and mesophyll cell types.

The protein resides in the plastid. Its subcellular location is the chloroplast stroma. The protein localises to the chloroplast nucleoid. It is found in the plastid stroma. It catalyses the reaction hydrogen sulfide + 6 oxidized [2Fe-2S]-[ferredoxin] + 3 H2O = sulfite + 6 reduced [2Fe-2S]-[ferredoxin] + 7 H(+). Its activity is regulated as follows. Inhibited by the tryptophan-modifying reagent, N-bromosuccinimide (NBS), by the lysine-modifying reagent, N-acetylsuccinimide and by the arginine-modifying reagent, phenylglyoxal. Complex formation with ferredoxin prevents these inhibitions. In terms of biological role, essential protein with sulfite reductase activity required in assimilatory sulfate reduction pathway during both primary and secondary metabolism and thus involved in development and growth. Functionally, DNA-binding protein that binds to both double-stranded and single-stranded DNA without significant sequence specificity to reversibly repress the transcriptional activity of chloroplast nucleoids by promoting DNA compaction and possibly regulate DNA replication. The protein is Sulfite reductase [ferredoxin], chloroplastic (SIR) of Zea mays (Maize).